Consider the following 590-residue polypeptide: Enhancer of polycomb-like protein 1 (590 aa).

Disordered stretches follow at residues 302 to 335 (DEDL…PVRS) and 471 to 497 (TPPR…EPPV). Basic and acidic residues predominate over residues 475–488 (ELGEDRSDRWKYDS).

Belongs to the enhancer of polycomb family. Component of the NuA4 histone acetyltransferase complex.

The protein localises to the nucleus. In terms of biological role, component of the NuA4 histone acetyltransferase complex which is involved in transcriptional activation of selected genes principally by acetylation of nucleosomal histone H4 and H2A. The NuA4 complex is also involved in DNA repair. Involved in gene silencing by neighboring heterochromatin, blockage of the silencing spreading along the chromosome, and required for cell cycle progression through G2/M. The protein is Enhancer of polycomb-like protein 1 (EPL1) of Gibberella zeae (strain ATCC MYA-4620 / CBS 123657 / FGSC 9075 / NRRL 31084 / PH-1) (Wheat head blight fungus).